The chain runs to 279 residues: Ribosomal RNA small subunit methyltransferase A (279 aa).

Residues His11, Leu13, Gly42, Glu63, Asp88, and Asn104 each contribute to the S-adenosyl-L-methionine site.

Belongs to the class I-like SAM-binding methyltransferase superfamily. rRNA adenine N(6)-methyltransferase family. RsmA subfamily.

It is found in the cytoplasm. It catalyses the reaction adenosine(1518)/adenosine(1519) in 16S rRNA + 4 S-adenosyl-L-methionine = N(6)-dimethyladenosine(1518)/N(6)-dimethyladenosine(1519) in 16S rRNA + 4 S-adenosyl-L-homocysteine + 4 H(+). Specifically dimethylates two adjacent adenosines (A1518 and A1519) in the loop of a conserved hairpin near the 3'-end of 16S rRNA in the 30S particle. May play a critical role in biogenesis of 30S subunits. The protein is Ribosomal RNA small subunit methyltransferase A of Synechococcus sp. (strain JA-3-3Ab) (Cyanobacteria bacterium Yellowstone A-Prime).